We begin with the raw amino-acid sequence, 256 residues long: MPLSRALILGVLALTTMLSPCGGQDDIEADHVGSYGITVYQYHESKGQYTHEFDGDERFYVDLDKKETIWRIPEFGQLISFDPQGALRNIAIIKHNLEILMKRSNSTPAVNEVPEATVFSKSPVLLGQPNTLICFVDNIFPPVINITWLRNSKPLTEGVYETSFLINSDYSFHKMAYLTFIPSNDDIYDCKVEHWSLDEPVLRHWEPEIPAPMSELTETVVCALGLSVGLVGIVVGTIFIIQGLRSVAPSRHPGPL.

The signal sequence occupies residues 1-23 (MPLSRALILGVLALTTMLSPCGG). The tract at residues 24–111 (QDDIEADHVG…KRSNSTPAVN (88 aa)) is alpha-1. Over 24 to 218 (QDDIEADHVG…IPAPMSELTE (195 aa)) the chain is Extracellular. In terms of domain architecture, Ig-like C1-type spans 108 to 206 (PAVNEVPEAT…LDEPVLRHWE (99 aa)). The interval 112–205 (EVPEATVFSK…SLDEPVLRHW (94 aa)) is alpha-2. An intrachain disulfide couples Cys-134 to Cys-190. Residue Asn-145 is glycosylated (N-linked (GlcNAc...) asparagine). Residues 206–218 (EPEIPAPMSELTE) are connecting peptide. Residues 219–244 (TVVCALGLSVGLVGIVVGTIFIIQGL) form a helical membrane-spanning segment. Residues 245–256 (RSVAPSRHPGPL) lie on the Cytoplasmic side of the membrane.

The protein belongs to the MHC class II family.

The protein localises to the membrane. The protein is Rano class II histocompatibility antigen, B alpha chain (RT1-Ba) of Rattus norvegicus (Rat).